We begin with the raw amino-acid sequence, 353 residues long: MSEPLKPRIDFEQPLQSLDEPVLKSAQAFDEQAAEKFYPAAPELDAEDEEGRVEGLVNAALKPKRSLWRKMVTAGMVILGASVIAQSVQWVNQAWQQQDWIALGATTAGGLIILAGVGSVVTEWRRLYHLRQRAEERDIARALLVSHGVGQGRVFCEKLARQAGLDQGHPALQRWQASLHETHNDREVVELYAKLVQPALDNQARAEISRYAAESALMIAVSPLALVDMAFIAWRNIRLINRIAALYGIELGYFSRIRLFRLVLLNIAFAGASELVREVGMDWLSQDLAARLSARAAQGIGAGLLTARLGIKAMELCRPLPWLEGDKPKLGDFRRQLMNQLKNTLPKKDKTAH.

3 helical membrane-spanning segments follow: residues 71 to 91 (MVTA…VQWV), 101 to 121 (IALG…GSVV), and 214 to 234 (ESAL…FIAW).

It belongs to the UPF0283 family.

The protein resides in the cell inner membrane. The protein is UPF0283 membrane protein YPA_1696 of Yersinia pestis bv. Antiqua (strain Antiqua).